We begin with the raw amino-acid sequence, 544 residues long: Zinc finger and SCAN domain-containing protein 25 (544 aa).

Glycyl lysine isopeptide (Lys-Gly) (interchain with G-Cter in SUMO2) cross-links involve residues Lys3 and Lys22. The region spanning 42 to 124 is the SCAN box domain; the sequence is RLRFRQFRYQ…AMVEDLTERA (83 aa). Lys128 is covalently cross-linked (Glycyl lysine isopeptide (Lys-Gly) (interchain with G-Cter in SUMO2)). The tract at residues 157–189 is disordered; that stretch reads VEVKPEWGMPPGEGVQGPDPGTEEQLSQDPGDE. Glycyl lysine isopeptide (Lys-Gly) (interchain with G-Cter in SUMO2) cross-links involve residues Lys278 and Lys285. C2H2-type zinc fingers lie at residues 348–370, 375–397, 403–425, 431–453, 459–480, and 486–508; these read FQCPECGKGFSRSSNLVRHQRTH, YGCVECGKGFTLREYLMKHQRTH, YVCSECWKTFSQRHHLEVHQRSH, YKCGDCWKSFSRRQHLQVHRRTH, YTCECGKSFSRNANLAVHRRAH, and YGCQVCGKRFSKGERLVRHQRIH. Residues 514-536 form a C2H2-type 7; degenerate zinc finger; the sequence is YHCPACGRSFNQRSILNRHQKTQ.

Belongs to the krueppel C2H2-type zinc-finger protein family.

Its subcellular location is the nucleus. May be involved in transcriptional regulation. The protein is Zinc finger and SCAN domain-containing protein 25 (ZSCAN25) of Homo sapiens (Human).